The sequence spans 593 residues: 2-succinyl-5-enolpyruvyl-6-hydroxy-3-cyclohexene-1-carboxylate synthase (593 aa).

The protein belongs to the TPP enzyme family. MenD subfamily. Homodimer. Requires Mg(2+) as cofactor. Mn(2+) serves as cofactor. It depends on thiamine diphosphate as a cofactor.

The catalysed reaction is isochorismate + 2-oxoglutarate + H(+) = 5-enolpyruvoyl-6-hydroxy-2-succinyl-cyclohex-3-ene-1-carboxylate + CO2. It functions in the pathway quinol/quinone metabolism; 1,4-dihydroxy-2-naphthoate biosynthesis; 1,4-dihydroxy-2-naphthoate from chorismate: step 2/7. Its pathway is quinol/quinone metabolism; menaquinone biosynthesis. Catalyzes the thiamine diphosphate-dependent decarboxylation of 2-oxoglutarate and the subsequent addition of the resulting succinic semialdehyde-thiamine pyrophosphate anion to isochorismate to yield 2-succinyl-5-enolpyruvyl-6-hydroxy-3-cyclohexene-1-carboxylate (SEPHCHC). This Pelodictyon phaeoclathratiforme (strain DSM 5477 / BU-1) protein is 2-succinyl-5-enolpyruvyl-6-hydroxy-3-cyclohexene-1-carboxylate synthase.